Consider the following 452-residue polypeptide: UDP-N-acetylmuramoylalanine--D-glutamate ligase (452 aa).

119 to 125 provides a ligand contact to ATP; it reads GSNGKTT.

The protein belongs to the MurCDEF family.

It localises to the cytoplasm. The catalysed reaction is UDP-N-acetyl-alpha-D-muramoyl-L-alanine + D-glutamate + ATP = UDP-N-acetyl-alpha-D-muramoyl-L-alanyl-D-glutamate + ADP + phosphate + H(+). It participates in cell wall biogenesis; peptidoglycan biosynthesis. Functionally, cell wall formation. Catalyzes the addition of glutamate to the nucleotide precursor UDP-N-acetylmuramoyl-L-alanine (UMA). The polypeptide is UDP-N-acetylmuramoylalanine--D-glutamate ligase (Streptococcus pyogenes serotype M4 (strain MGAS10750)).